Reading from the N-terminus, the 221-residue chain is Alpha-ketoglutarate-dependent dioxygenase alkB homolog 7, mitochondrial (221 aa).

The N-terminal 23 residues, 1 to 23 (MAGSRRLAMRLLSGCAWVRGSDS), are a transit peptide targeting the mitochondrion. His-121 and Asp-123 together coordinate Fe cation. Residue Tyr-165 participates in 2-oxoglutarate binding. His-177 serves as a coordination point for Fe cation. Residues 197–199 (RIS) and Arg-203 each bind 2-oxoglutarate.

The protein belongs to the alkB family. Fe(2+) is required as a cofactor. Widely expressed.

It localises to the mitochondrion matrix. May function as protein hydroxylase; can catalyze auto-hydroxylation at Leu-110 (in vitro), but this activity may be due to the absence of the true substrate. Required to induce programmed necrosis in response to DNA damage caused by cytotoxic alkylating agents. Acts by triggering the collapse of mitochondrial membrane potential and loss of mitochondrial function that leads to energy depletion and cell death. ALKBH7-mediated necrosis is probably required to prevent the accumulation of cells with DNA damage. Does not display DNA demethylase activity. Involved in fatty acid metabolism. The sequence is that of Alpha-ketoglutarate-dependent dioxygenase alkB homolog 7, mitochondrial (Alkbh7) from Mus musculus (Mouse).